Here is a 176-residue protein sequence, read N- to C-terminus: ATP synthase subunit d, mitochondrial (176 aa).

In terms of assembly, F-type ATP synthases have 2 components, the catalytic core F(1) and the membrane-embedded component F(0), linked together by a central stalk and a peripheral stalk. The central stalk, also called rotor shaft, is often seen as part of F(1). The peripheral stalk is seen as part of F(0). F(0) contains the membrane channel next to the rotor. F-type ATP synthases form dimers but each monomer functions independently in ATP generation. The dimer consists of 17 different polypeptides: ATP1 (subunit alpha, 3 molecules per monomer, part of F(1)), ATP2 (subunit beta, 3 copies per monomer, part of F(1)), ATP3 (subunit gamma, part of the central stalk), ATP4 (subunit b, part of the peripheral stalk), ATP5/OSCP (subunit 5/OSCP, part of the peripheral stalk), ATP6 (subunit a, part of the peripheral stalk), ATP7 (subunit d, part of the peripheral stalk), ATP8 (subunit 8, part of the peripheral stalk), OLI1 (subunit c, part of the rotor, 10 molecules per monomer), ATP14 (subunit h, part of the peripheral stalk), ATP15 (subunit epsilon, part of the central stalk), ATP16 (subunit delta, part of the central stalk), ATP17 (subunit f, part of the peripheral stalk), ATP18 (subunit i/j, part of the peripheral stalk), ATP19 (subunit k, dimer-specific, at interface between monomers), ATP20 (subunit g, at interface between monomers), TIM11 (subunit e, at interface between monomers).

It localises to the mitochondrion inner membrane. Its function is as follows. Mitochondrial membrane ATP synthase (F(1)F(0) ATP synthase or Complex V) produces ATP from ADP in the presence of a proton gradient across the membrane which is generated by electron transport complexes of the respiratory chain. F-type ATP synthases consist of two structural domains, F(1) - containing the extramembraneous catalytic core, and F(0) - containing the membrane proton channel, linked together by a central stalk and a peripheral stalk. During catalysis, ATP synthesis in the catalytic domain of F(1) is coupled via a rotary mechanism of the central stalk subunits to proton translocation. Part of the complex F(0) domain and the peripheral stalk, which acts as a stator to hold the catalytic alpha/ATP1(3)beta/ATP2(3) subcomplex and subunit a/ATP6 static relative to the rotary elements. The protein is ATP synthase subunit d, mitochondrial of Yarrowia lipolytica (strain CLIB 122 / E 150) (Yeast).